Reading from the N-terminus, the 486-residue chain is Glutamyl-tRNA(Gln) amidotransferase subunit A (486 aa).

Residues lysine 75 and serine 150 each act as charge relay system in the active site. Residue serine 174 is the Acyl-ester intermediate of the active site.

The protein belongs to the amidase family. GatA subfamily. Heterotrimer of A, B and C subunits.

The enzyme catalyses L-glutamyl-tRNA(Gln) + L-glutamine + ATP + H2O = L-glutaminyl-tRNA(Gln) + L-glutamate + ADP + phosphate + H(+). Functionally, allows the formation of correctly charged Gln-tRNA(Gln) through the transamidation of misacylated Glu-tRNA(Gln) in organisms which lack glutaminyl-tRNA synthetase. The reaction takes place in the presence of glutamine and ATP through an activated gamma-phospho-Glu-tRNA(Gln). This chain is Glutamyl-tRNA(Gln) amidotransferase subunit A, found in Nostoc punctiforme (strain ATCC 29133 / PCC 73102).